Reading from the N-terminus, the 1275-residue chain is O-antigen biosynthesis protein RfbC (1275 aa).

In terms of biological role, involved in O-antigen biosynthesis. The sequence is that of O-antigen biosynthesis protein RfbC (rfbC) from Myxococcus xanthus.